Reading from the N-terminus, the 643-residue chain is Pescadillo homolog (643 aa).

The span at 305-323 shows a compositional bias: basic and acidic residues; it reads EKTKEKNHKSDNNPHEHTT. The segment at 305 to 329 is disordered; the sequence is EKTKEKNHKSDNNPHEHTTNIDNNN. In terms of domain architecture, BRCT spans 378 to 474; the sequence is KLKELFKNHI…NILPCSDYLT (97 aa). A coiled-coil region spans residues 531–615; the sequence is NYKEEEEEEN…IVLSKKKRKL (85 aa).

This sequence belongs to the pescadillo family. Interacts with dual specificity protein phosphatase YVH1.

Its subcellular location is the nucleus. The protein localises to the nucleolus. It localises to the nucleoplasm. Functionally, required for maturation of ribosomal RNAs and formation of the large ribosomal subunit. The chain is Pescadillo homolog from Plasmodium falciparum (isolate 3D7).